Consider the following 266-residue polypeptide: Na(+)-translocating NADH-quinone reductase subunit C (266 aa).

The helical transmembrane segment at 16–36 threads the bilayer; it reads LLVVVILCLVCSVVVAGAAVG. T232 is subject to FMN phosphoryl threonine.

It belongs to the NqrC family. Composed of six subunits; NqrA, NqrB, NqrC, NqrD, NqrE and NqrF. FMN is required as a cofactor.

The protein resides in the cell inner membrane. It catalyses the reaction a ubiquinone + n Na(+)(in) + NADH + H(+) = a ubiquinol + n Na(+)(out) + NAD(+). Functionally, NQR complex catalyzes the reduction of ubiquinone-1 to ubiquinol by two successive reactions, coupled with the transport of Na(+) ions from the cytoplasm to the periplasm. NqrA to NqrE are probably involved in the second step, the conversion of ubisemiquinone to ubiquinol. The chain is Na(+)-translocating NADH-quinone reductase subunit C from Yersinia pestis.